Here is a 183-residue protein sequence, read N- to C-terminus: ESX-1 secretion-associated protein EspH (183 aa).

Over residues methionine 1 to alanine 16 the composition is skewed to acidic residues. The disordered stretch occupies residues methionine 1 to alanine 32.

The chain is ESX-1 secretion-associated protein EspH from Mycobacterium tuberculosis (strain ATCC 25618 / H37Rv).